Here is a 189-residue protein sequence, read N- to C-terminus: MAKIPYAILEKGSLLLASPDTDQGVFARSVILLCEHSLNGSFGLILNKTLGLEISDDIFTFDKVSNNNIRFCMGGPLQANQMMLLHSCSEISEQTLEICPSVYLGGDLSFLQEIAASESGPTINLCFGYSGWQAGQLEKEFLEGNWFLAPASYEYVFSDNPDNLWSRILKDLGGKYASLSTVPENLLLN.

This sequence belongs to the UPF0301 (AlgH) family.

The protein is UPF0301 protein CCA_00630 of Chlamydia caviae (strain ATCC VR-813 / DSM 19441 / 03DC25 / GPIC) (Chlamydophila caviae).